An 824-amino-acid polypeptide reads, in one-letter code: Sphingomyelin phosphodiesterase 4 (824 aa).

A helical transmembrane segment spans residues 777–797 (LAFLFIFYILGSLLSLGPLIC).

Mg(2+) serves as cofactor.

It is found in the endoplasmic reticulum membrane. Its subcellular location is the golgi apparatus membrane. The protein localises to the nucleus envelope. It localises to the cell membrane. The protein resides in the sarcolemma. It catalyses the reaction a sphingomyelin + H2O = phosphocholine + an N-acylsphing-4-enine + H(+). Catalyzes the hydrolysis of membrane sphingomyelin to form phosphorylcholine and ceramide. It has a relevant role in the homeostasis of membrane sphingolipids, thereby influencing membrane integrity, and endoplasmic reticulum organization and function. May sensitize cells to DNA damage-induced apoptosis. The sequence is that of Sphingomyelin phosphodiesterase 4 (smpd4) from Xenopus laevis (African clawed frog).